A 249-amino-acid polypeptide reads, in one-letter code: MLRWPLALTFLLLAVSGLECDVKEVCLASPGIPGTPGSHGLPGRDGRDGIKGDPGPPGPMGPPGGMAGPPGQDGMIGAPGLPGERGEKGEPGERGPPGLPAHLDEELQSALHEIRHQILQSMGVLSFQEFMLAVGEKVFSTNGQSVAFWMSLESCVPEQVGRIAAPRSPEENEAIASIVKKHNTYAYLGLVEGPTAGDFFYLDGTPVNYTNWYPGEPRGRGKEKCVEMYTDGQWNDRNCQQYRLAICEF.

The signal sequence occupies residues 1–20 (MLRWPLALTFLLLAVSGLEC). A Collagen-like domain is found at 28 to 100 (ASPGIPGTPG…PGERGPPGLP (73 aa)). A disordered region spans residues 29-102 (SPGIPGTPGS…ERGPPGLPAH (74 aa)). 8 positions are modified to 4-hydroxyproline: Pro-30, Pro-33, Pro-36, Pro-42, Pro-54, Pro-57, Pro-63, and Pro-70. A compositionally biased stretch (basic and acidic residues) spans 42 to 51 (PGRDGRDGIK). Positions 84 to 93 (ERGEKGEPGE) are enriched in basic and acidic residues. Positions 133 to 249 (AVGEKVFSTN…QQYRLAICEF (117 aa)) constitute a C-type lectin domain. Intrachain disulfides connect Cys-155–Cys-247 and Cys-225–Cys-239. The N-linked (GlcNAc...) asparagine glycan is linked to Asn-208. Positions 216, 218, 235, and 236 each coordinate Ca(2+).

This sequence belongs to the SFTPA family. As to quaternary structure, oligomeric complex of 6 set of homotrimers.

It localises to the secreted. The protein resides in the extracellular space. Its subcellular location is the extracellular matrix. It is found in the surface film. Its function is as follows. In presence of calcium ions, it binds to surfactant phospholipids and contributes to lower the surface tension at the air-liquid interface in the alveoli of the mammalian lung and is essential for normal respiration. Enhances the expression of MYO18A/SP-R210 on alveolar macrophages. The protein is Pulmonary surfactant-associated protein A (SFTPA1) of Sus scrofa (Pig).